The following is a 59-amino-acid chain: Large ribosomal subunit protein uL30 (59 aa).

It belongs to the universal ribosomal protein uL30 family. As to quaternary structure, part of the 50S ribosomal subunit.

In Haemophilus ducreyi (strain 35000HP / ATCC 700724), this protein is Large ribosomal subunit protein uL30.